Consider the following 636-residue polypeptide: Threonine--tRNA ligase (636 aa).

Residues 1–63 (MNEINVTLPD…ADGARVEIIT (63 aa)) form the TGS domain. The catalytic stretch occupies residues 243–534 (DHRKLGRELD…LIEHFAGNFP (292 aa)). Positions 335, 386, and 511 each coordinate Zn(2+).

This sequence belongs to the class-II aminoacyl-tRNA synthetase family. Homodimer. Zn(2+) is required as a cofactor.

Its subcellular location is the cytoplasm. The catalysed reaction is tRNA(Thr) + L-threonine + ATP = L-threonyl-tRNA(Thr) + AMP + diphosphate + H(+). In terms of biological role, catalyzes the attachment of threonine to tRNA(Thr) in a two-step reaction: L-threonine is first activated by ATP to form Thr-AMP and then transferred to the acceptor end of tRNA(Thr). Also edits incorrectly charged L-seryl-tRNA(Thr). The protein is Threonine--tRNA ligase of Citrifermentans bemidjiense (strain ATCC BAA-1014 / DSM 16622 / JCM 12645 / Bem) (Geobacter bemidjiensis).